Consider the following 649-residue polypeptide: MAVNTEERHGQESLENHKHMFNQGVNYELYNFLGVHKISRDDESGYVFRVWAPHAKQVWVCGDFNNWDKSHPMILDEKSGIWSIEVKESRENQYYKYLVKQANGREIMKTDPMAQVYEKRPETAAVVKELEPFKWNDGLWRGRQKRMNHFNNPINIYEVHAPSWKEHEDGSLYTFKDLTAELIPYVKKMGYTHIEFMPLMEHPLPASWGYQLTGYFALCSSYGTPDEFKDFVNECHQNNIGVLVDWVPGHFSINDDALAYYDGTPTYEYEDPDRAKNIGWGALNFDLGKPEVQSFLLSSAFYWLNEFHLDGMRVDAVSNMIYLDYDEGPWKPNKYGDTRNLEGYAFLQKFNKVVKFAHPESLIIAEESSSGTQISGTIESGAIGFDYKWNMGWMNDVLEFFEMDPYFRKDNLNLVTFSFMYWQAENFVLPLSHDEVVHGKKSLMHKMWGDRYRQFAQLRTLYTFMMMHPGKKLLFMSGEWGQFLEWKFDHGLEWVDLQDEMNAKMQHFTSVLNHFYKEERPLWELGQQDATLEVIDADNHNDTVLSFIRHGKRKKDFLIVILNFTPVERRNFRIGVPYEGTYTEILNTEMKEFGGTWVEHNADSVSEEVNFKDYEHSITTTVPALGAIILKPKDIKVTRRSSKKHSHKK.

The Nucleophile role is filled by D315. Catalysis depends on E366, which acts as the Proton donor.

The protein belongs to the glycosyl hydrolase 13 family. GlgB subfamily. In terms of assembly, monomer.

It catalyses the reaction Transfers a segment of a (1-&gt;4)-alpha-D-glucan chain to a primary hydroxy group in a similar glucan chain.. Its pathway is glycan biosynthesis; glycogen biosynthesis. Functionally, catalyzes the formation of the alpha-1,6-glucosidic linkages in glycogen by scission of a 1,4-alpha-linked oligosaccharide from growing alpha-1,4-glucan chains and the subsequent attachment of the oligosaccharide to the alpha-1,6 position. The protein is 1,4-alpha-glucan branching enzyme GlgB of Ligilactobacillus salivarius (strain UCC118) (Lactobacillus salivarius).